The following is a 382-amino-acid chain: Na(+)/H(+) antiporter NhaA (382 aa).

Transmembrane regions (helical) follow at residues 13-33, 58-78, 94-114, 124-144, 153-173, 179-199, 204-224, 256-276, 285-305, 325-345, and 357-377; these read IGGILLFIAAVIAIIIANSPF, LLLWINDGLMAIYFLLIGLEI, LVPALTALAGLIFPALIFIFF, GWAIPTATDIAFTLGIVSLLG, ILLTAIAIFDDIAAIVIIALF, SLLSLSLALVFTLILIGLNYF, ISVFMLFGVALWIAVLKSGVH, VVFLILPLFAFANAGVSFVGL, VVLGIGLGLFLGKQLGIFLSL, VYGIALICGVGFTMSLFIGSL, and MVKIGVVLGSFIAGLTGFLVL.

The protein belongs to the NhaA Na(+)/H(+) (TC 2.A.33) antiporter family.

The protein localises to the cell inner membrane. The enzyme catalyses Na(+)(in) + 2 H(+)(out) = Na(+)(out) + 2 H(+)(in). Its function is as follows. Na(+)/H(+) antiporter that extrudes sodium in exchange for external protons. This chain is Na(+)/H(+) antiporter NhaA, found in Legionella pneumophila (strain Paris).